The sequence spans 1337 residues: Multidrug resistance protein fer6 (1337 aa).

A signal peptide spans 1–23; that stretch reads MTPEASANWFSLCWFAWIDPILT. Asn-71 carries an N-linked (GlcNAc...) asparagine glycan. A run of 2 helical transmembrane segments spans residues 94–114 and 138–158; these read FWIG…SPLL and LGSG…CVFL. Residues 95-386 enclose the ABC transmembrane type-1 1 domain; sequence WIGGLLKLLA…LPIAWNAIVD (292 aa). N-linked (GlcNAc...) asparagine glycosylation occurs at Asn-187. 4 helical membrane-spanning segments follow: residues 220-242, 247-269, 331-351, and 359-379; these read FFHM…IWSL, LPGI…RLFA, ALAF…YALV, and ILFS…FLPI. The 251-residue stretch at 417 to 667 folds into the ABC transporter 1 domain; sequence IQLEDASFTW…KGRVAELLLT (251 aa). The tract at residues 432–460 is disordered; that stretch reads ADTAKPVNEKKGQDSPSNEKETPVDRAST. Residues 438–455 show a composition bias toward basic and acidic residues; it reads VNEKKGQDSPSNEKETPV. N-linked (GlcNAc...) asparagine glycosylation is present at Asn-465. 478 to 485 is a binding site for ATP; that stretch reads GGVGSGKS. The disordered stretch occupies residues 699–751; the sequence is GSASNRNSEASESTTTTVNAESKDTSNAEGVTNKTEKKDLVAPPAQAKSKALM. Low complexity predominate over residues 700-718; that stretch reads SASNRNSEASESTTTTVNA. N-linked (GlcNAc...) asparagine glycosylation occurs at Asn-731. Helical transmembrane passes span 769 to 789, 817 to 837, 890 to 909, 915 to 933, 999 to 1019, and 1028 to 1048; these read YLNA…VLVF, GIYA…GVIF, AMRT…VLIA, FLIP…AAYY, LSVR…ILVV, and GETG…GWMI. The ABC transmembrane type-1 2 domain maps to 781 to 1056; the sequence is LFLVAVLVFQ…MIRHAAELEN (276 aa). Asn-1057 is a glycosylation site (N-linked (GlcNAc...) asparagine). The 229-residue stretch at 1097-1325 folds into the ABC transporter 2 domain; the sequence is IRFEGVEAKY…EKGAFRALCD (229 aa). Position 1131-1138 (1131-1138) interacts with ATP; sequence GRTGAGKS. Asn-1227 carries an N-linked (GlcNAc...) asparagine glycan.

The protein belongs to the ABC transporter superfamily. ABCC family. Conjugate transporter (TC 3.A.1.208) subfamily.

It is found in the membrane. Its function is as follows. Multidrug resistance protein; part of the gene cluster that mediates the biosynthesis of siderophore ferrichrome A which is contributing to organismal virulence. This chain is Multidrug resistance protein fer6, found in Mycosarcoma maydis (Corn smut fungus).